Here is a 102-residue protein sequence, read N- to C-terminus: Co-chaperonin GroES (102 aa).

It belongs to the GroES chaperonin family. As to quaternary structure, heptamer of 7 subunits arranged in a ring. Interacts with the chaperonin GroEL.

The protein resides in the cytoplasm. Its function is as follows. Together with the chaperonin GroEL, plays an essential role in assisting protein folding. The GroEL-GroES system forms a nano-cage that allows encapsulation of the non-native substrate proteins and provides a physical environment optimized to promote and accelerate protein folding. GroES binds to the apical surface of the GroEL ring, thereby capping the opening of the GroEL channel. This is Co-chaperonin GroES from Streptomyces coelicolor (strain ATCC BAA-471 / A3(2) / M145).